The sequence spans 210 residues: Orotate phosphoribosyltransferase (210 aa).

Residues R96, K100, H102, and 122 to 130 each bind 5-phospho-alpha-D-ribose 1-diphosphate; that span reads EDLISTGGS. Position 126 (S126) interacts with orotate.

Belongs to the purine/pyrimidine phosphoribosyltransferase family. PyrE subfamily. Homodimer. It depends on Mg(2+) as a cofactor.

It carries out the reaction orotidine 5'-phosphate + diphosphate = orotate + 5-phospho-alpha-D-ribose 1-diphosphate. It participates in pyrimidine metabolism; UMP biosynthesis via de novo pathway; UMP from orotate: step 1/2. In terms of biological role, catalyzes the transfer of a ribosyl phosphate group from 5-phosphoribose 1-diphosphate to orotate, leading to the formation of orotidine monophosphate (OMP). The sequence is that of Orotate phosphoribosyltransferase from Streptococcus pneumoniae serotype 4 (strain ATCC BAA-334 / TIGR4).